Here is a 179-residue protein sequence, read N- to C-terminus: Large ribosomal subunit protein uL5 (179 aa).

The protein belongs to the universal ribosomal protein uL5 family. In terms of assembly, part of the 50S ribosomal subunit; part of the 5S rRNA/L5/L18/L25 subcomplex. Contacts the 5S rRNA and the P site tRNA. Forms a bridge to the 30S subunit in the 70S ribosome.

This is one of the proteins that bind and probably mediate the attachment of the 5S RNA into the large ribosomal subunit, where it forms part of the central protuberance. In the 70S ribosome it contacts protein S13 of the 30S subunit (bridge B1b), connecting the 2 subunits; this bridge is implicated in subunit movement. Contacts the P site tRNA; the 5S rRNA and some of its associated proteins might help stabilize positioning of ribosome-bound tRNAs. This is Large ribosomal subunit protein uL5 from Prochlorococcus marinus (strain MIT 9303).